A 454-amino-acid chain; its full sequence is tRNA modification GTPase MnmE (454 aa).

Arginine 23, glutamate 80, and lysine 120 together coordinate (6S)-5-formyl-5,6,7,8-tetrahydrofolate. The TrmE-type G domain maps to 216 to 377 (GMKVVIAGRP…LRNNLKQSMG (162 aa)). Asparagine 226 contacts K(+). Residues 226–231 (NAGKSS), 245–251 (TDIAGTT), 270–273 (DTAG), 335–338 (NKAD), and 358–360 (SAR) contribute to the GTP site. Serine 230 contributes to the Mg(2+) binding site. K(+)-binding residues include threonine 245, isoleucine 247, and threonine 250. Mg(2+) is bound at residue threonine 251. Position 454 (lysine 454) interacts with (6S)-5-formyl-5,6,7,8-tetrahydrofolate.

The protein belongs to the TRAFAC class TrmE-Era-EngA-EngB-Septin-like GTPase superfamily. TrmE GTPase family. As to quaternary structure, homodimer. Heterotetramer of two MnmE and two MnmG subunits. The cofactor is K(+).

It is found in the cytoplasm. Functionally, exhibits a very high intrinsic GTPase hydrolysis rate. Involved in the addition of a carboxymethylaminomethyl (cmnm) group at the wobble position (U34) of certain tRNAs, forming tRNA-cmnm(5)s(2)U34. This chain is tRNA modification GTPase MnmE, found in Salmonella paratyphi A (strain AKU_12601).